We begin with the raw amino-acid sequence, 255 residues long: 4-hydroxy-tetrahydrodipicolinate reductase (255 aa).

NAD(+)-binding positions include 8 to 13, 88 to 90, and 112 to 115; these read GATGRV, GTT, and ATNM. Residue His-144 is the Proton donor/acceptor of the active site. His-145 lines the (S)-2,3,4,5-tetrahydrodipicolinate pocket. The active-site Proton donor is Lys-148. Position 154-155 (154-155) interacts with (S)-2,3,4,5-tetrahydrodipicolinate; it reads GT.

The protein belongs to the DapB family.

The protein resides in the cytoplasm. It carries out the reaction (S)-2,3,4,5-tetrahydrodipicolinate + NAD(+) + H2O = (2S,4S)-4-hydroxy-2,3,4,5-tetrahydrodipicolinate + NADH + H(+). The catalysed reaction is (S)-2,3,4,5-tetrahydrodipicolinate + NADP(+) + H2O = (2S,4S)-4-hydroxy-2,3,4,5-tetrahydrodipicolinate + NADPH + H(+). Its pathway is amino-acid biosynthesis; L-lysine biosynthesis via DAP pathway; (S)-tetrahydrodipicolinate from L-aspartate: step 4/4. Catalyzes the conversion of 4-hydroxy-tetrahydrodipicolinate (HTPA) to tetrahydrodipicolinate. This Helicobacter hepaticus (strain ATCC 51449 / 3B1) protein is 4-hydroxy-tetrahydrodipicolinate reductase.